Consider the following 358-residue polypeptide: Bis(monoacylglycero)phosphate synthase CLN5 (358 aa).

The interval 1–23 (MAQVGSAGPGACGRRGAGAGAGP) is disordered. The Cytoplasmic portion of the chain corresponds to 1-29 (MAQVGSAGPGACGRRGAGAGAGPERTTWR). Over residues 7-21 (AGPGACGRRGAGAGA) the composition is skewed to gly residues. A helical; Signal-anchor for type II membrane protein transmembrane segment spans residues 30–46 (WAPALLWLATAAAVAGD). Residues 47-358 (PSRRQWPVPY…NRKNRTLSGL (312 aa)) are Lumenal-facing. Cystine bridges form between cysteine 69/cysteine 158 and cysteine 76/cysteine 164. The active-site Proton acceptor is histidine 116. Asparagine 129, asparagine 142, asparagine 177, and asparagine 202 each carry an N-linked (GlcNAc...) asparagine glycan. Cysteine 230 acts as the Nucleophile; Acyl-thioester intermediate in catalysis. N-linked (GlcNAc...) asparagine glycosylation is found at asparagine 254, asparagine 270, and asparagine 280. The interval 303-342 (FLLSLLQIFDAVVIHREFYLFYNFEYWFLPMKYPFIKITY) is membrane-anchoring. Asparagine 352 carries N-linked (GlcNAc...) asparagine glycosylation.

It belongs to the CLN5 family. In terms of assembly, multimer. Interacts with SORT1, RAB5A and RAB7A. Interacts with PPT1, TPP1, CLN3, CLN6, CLN8, ATP5F1A and ATP5F1B. N-glycosylated with both high mannose and complex type sugars. Glycosylation is important for proper folding and trafficking to the lysosomes. In terms of processing, the type II membrane signal anchor is proteolytically cleaved to produce a mature form that is transported to the lysosomes (Bis(monoacylglycero)phosphate synthase CLN5, secreted form). Post-translationally, can undergo proteolytic cleavage at the C-terminus, probably by a cysteine protease and may involve the removal of approximately 10-15 residues from the C-terminal end.

It is found in the lysosome. It localises to the membrane. It carries out the reaction S-hexadecanoyl-L-cysteinyl-[protein] + H2O = L-cysteinyl-[protein] + hexadecanoate + H(+). The catalysed reaction is 2 1-acyl-sn-glycero-3-phospho-(1'-sn-glycerol) = 1-acyl-sn-glycero-3-phospho-(3'-acyl-sn-1'-glycerol) + sn-glycero-3-phospho-(1'-sn-glycerol). It catalyses the reaction 2 1-(9Z-octadecenoyl)-sn-glycero-3-phospho-(1'-sn-glycerol) = 1-(9Z-octadecenoyl)-sn-glycero-3-phospho-(3'-(9Z-octadecenoyl)-1'-sn-glycerol) + sn-glycero-3-phospho-(1'-sn-glycerol). The enzyme catalyses 2 1-octadecanoyl-sn-glycero-3-phospho-(1'-sn-glycerol) = 1-octadecanoyl-sn-glycero-3-phospho-(3'-octadecanoyl-1'-sn-glycerol) + sn-glycero-3-phospho-(1'-sn-glycerol). It carries out the reaction 2 1-hexadecanoyl-sn-glycero-3-phospho-(1'-sn-glycerol) = 1-hexadecanoyl-sn-glycero-3-phospho-(3'-hexadecanoyl-1'-sn-glycerol) + sn-glycero-3-phospho-(1'-sn-glycerol). The catalysed reaction is 2 1-tetradecanoyl-sn-glycero-3-phospho-(1'-sn-glycerol) = 1-tetradecanoyl-sn-glycero-3-phospho-(3'-tetradecanoyl-1'-sn-glycerol) + sn-glycero-3-phospho-(1'-sn-glycerol). Catalyzes the synthesis of bis(monoacylglycero)phosphate (BMP) via transacylation of 2 molecules of lysophosphatidylglycerol (LPG). BMP also known as lysobisphosphatidic acid plays a key role in the formation of intraluminal vesicles and in maintaining intracellular cholesterol homeostasis. Can use only LPG as the exclusive lysophospholipid acyl donor for base exchange and displays BMP synthase activity towards various LPGs (LPG 14:0, LPG 16:0, LPG 18:0, LPG 18:1) with a higher preference for longer chain lengths. Plays a role in influencing the retrograde trafficking of lysosomal sorting receptors SORT1 and IGF2R from the endosomes to the trans-Golgi network by controlling the recruitment of retromer complex to the endosomal membrane. Regulates the localization and activation of RAB7A which is required to recruit the retromer complex to the endosomal membrane. Functionally, exhibits palmitoyl protein thioesterase (S-depalmitoylation) activity in vitro and most likely plays a role in protein S-depalmitoylation. This Bos taurus (Bovine) protein is Bis(monoacylglycero)phosphate synthase CLN5 (CLN5).